A 746-amino-acid polypeptide reads, in one-letter code: Ring assembly protein 3 (746 aa).

It localises to the cytoplasm. In terms of biological role, essential for actinomyosin ring assembly during cytokinesis. Has a role, in conjunction with F-actin, in assembling myosin II-containing proteins, such as myo2, at the division site. This chain is Ring assembly protein 3 (rng3), found in Schizosaccharomyces pombe (strain 972 / ATCC 24843) (Fission yeast).